Here is a 250-residue protein sequence, read N- to C-terminus: NADH-quinone oxidoreductase subunit C (250 aa).

It belongs to the complex I 30 kDa subunit family. NDH-1 is composed of 14 different subunits. Subunits NuoB, C, D, E, F, and G constitute the peripheral sector of the complex.

The protein resides in the cell inner membrane. The catalysed reaction is a quinone + NADH + 5 H(+)(in) = a quinol + NAD(+) + 4 H(+)(out). Its function is as follows. NDH-1 shuttles electrons from NADH, via FMN and iron-sulfur (Fe-S) centers, to quinones in the respiratory chain. The immediate electron acceptor for the enzyme in this species is believed to be ubiquinone. Couples the redox reaction to proton translocation (for every two electrons transferred, four hydrogen ions are translocated across the cytoplasmic membrane), and thus conserves the redox energy in a proton gradient. The protein is NADH-quinone oxidoreductase subunit C of Xylella fastidiosa (strain M23).